The following is a 658-amino-acid chain: UvrABC system protein B (658 aa).

One can recognise a Helicase ATP-binding domain in the interval 26-413; the sequence is EGINSGKKKQ…SPEVIEQIIR (388 aa). 39–46 contacts ATP; the sequence is GATGTGKT. Positions 92–115 match the Beta-hairpin motif; it reads YYDYYQPEAYVPQTDTFIEKDAQI. The 167-residue stretch at 430–596 folds into the Helicase C-terminal domain; the sequence is QIDDLLGEIQ…TIQKGVRDVI (167 aa). In terms of domain architecture, UVR spans 622 to 657; that stretch reads EKTIAKMEAEMKEAAKALDFERAAELRDLLLELKAE.

It belongs to the UvrB family. Forms a heterotetramer with UvrA during the search for lesions. Interacts with UvrC in an incision complex.

The protein localises to the cytoplasm. Functionally, the UvrABC repair system catalyzes the recognition and processing of DNA lesions. A damage recognition complex composed of 2 UvrA and 2 UvrB subunits scans DNA for abnormalities. Upon binding of the UvrA(2)B(2) complex to a putative damaged site, the DNA wraps around one UvrB monomer. DNA wrap is dependent on ATP binding by UvrB and probably causes local melting of the DNA helix, facilitating insertion of UvrB beta-hairpin between the DNA strands. Then UvrB probes one DNA strand for the presence of a lesion. If a lesion is found the UvrA subunits dissociate and the UvrB-DNA preincision complex is formed. This complex is subsequently bound by UvrC and the second UvrB is released. If no lesion is found, the DNA wraps around the other UvrB subunit that will check the other stand for damage. The protein is UvrABC system protein B of Bacillus cereus (strain ATCC 10987 / NRS 248).